A 114-amino-acid polypeptide reads, in one-letter code: MLEQEQASYRVERINELIRRELTLLLRTSIKDPRLRDMIITDVLISRDLSSAKVFYTVIKEDKKMIEPLLDKASGFFRIHLSKTIDLRHTPVLRFIFDSAPNTGARIEQLLSKL.

This sequence belongs to the RbfA family. In terms of assembly, monomer. Binds 30S ribosomal subunits, but not 50S ribosomal subunits or 70S ribosomes.

The protein resides in the cytoplasm. One of several proteins that assist in the late maturation steps of the functional core of the 30S ribosomal subunit. Associates with free 30S ribosomal subunits (but not with 30S subunits that are part of 70S ribosomes or polysomes). Required for efficient processing of 16S rRNA. May interact with the 5'-terminal helix region of 16S rRNA. The sequence is that of Ribosome-binding factor A from Vesicomyosocius okutanii subsp. Calyptogena okutanii (strain HA).